A 338-amino-acid chain; its full sequence is Phenylalanine--tRNA ligase alpha subunit (338 aa).

Glu-253 is a Mg(2+) binding site.

Belongs to the class-II aminoacyl-tRNA synthetase family. Phe-tRNA synthetase alpha subunit type 1 subfamily. In terms of assembly, tetramer of two alpha and two beta subunits. The cofactor is Mg(2+).

The protein localises to the cytoplasm. The enzyme catalyses tRNA(Phe) + L-phenylalanine + ATP = L-phenylalanyl-tRNA(Phe) + AMP + diphosphate + H(+). The sequence is that of Phenylalanine--tRNA ligase alpha subunit from Gloeobacter violaceus (strain ATCC 29082 / PCC 7421).